The primary structure comprises 421 residues: Serine hydroxymethyltransferase (421 aa).

(6S)-5,6,7,8-tetrahydrofolate is bound by residues L121 and G125–L127. An N6-(pyridoxal phosphate)lysine modification is found at K229.

It belongs to the SHMT family. Homodimer. It depends on pyridoxal 5'-phosphate as a cofactor.

It is found in the cytoplasm. It carries out the reaction (6R)-5,10-methylene-5,6,7,8-tetrahydrofolate + glycine + H2O = (6S)-5,6,7,8-tetrahydrofolate + L-serine. The protein operates within one-carbon metabolism; tetrahydrofolate interconversion. It participates in amino-acid biosynthesis; glycine biosynthesis; glycine from L-serine: step 1/1. Functionally, catalyzes the reversible interconversion of serine and glycine with tetrahydrofolate (THF) serving as the one-carbon carrier. This reaction serves as the major source of one-carbon groups required for the biosynthesis of purines, thymidylate, methionine, and other important biomolecules. Also exhibits THF-independent aldolase activity toward beta-hydroxyamino acids, producing glycine and aldehydes, via a retro-aldol mechanism. This is Serine hydroxymethyltransferase from Haemophilus influenzae (strain 86-028NP).